Reading from the N-terminus, the 207-residue chain is Large ribosomal subunit protein uL3 (207 aa).

Positions 119–143 (GFQGSIKRNGQHRGPMAHGSRYHRR) are disordered.

The protein belongs to the universal ribosomal protein uL3 family. Part of the 50S ribosomal subunit. Forms a cluster with proteins L14 and L19.

One of the primary rRNA binding proteins, it binds directly near the 3'-end of the 23S rRNA, where it nucleates assembly of the 50S subunit. The chain is Large ribosomal subunit protein uL3 from Ligilactobacillus salivarius (strain UCC118) (Lactobacillus salivarius).